The following is a 750-amino-acid chain: Xylosyl- and glucuronyltransferase LARGE2s (750 aa).

The Cytoplasmic portion of the chain corresponds to 1 to 10; that stretch reads MLCPCRGKLK. Residues 11–31 form a helical; Signal-anchor for type II membrane protein membrane-spanning segment; it reads LLVVSLSFVILFTWLYLLVGN. Over 32–750 the chain is Lumenal; sequence SENGRSLLLS…LKYLTAQRNI (719 aa). 3 N-linked (GlcNAc...) asparagine glycosylation sites follow: N116, N142, and N228. Residues 132 to 407 form a xylosyltransferase activity region; that stretch reads LHVACVCAGH…FLEYDGNLLR (276 aa). Residues D236 and D238 each contribute to the Mn(2+) site. N266 carries an N-linked (GlcNAc...) asparagine glycan. The glucuronyltransferase activity stretch occupies residues 408–750; that stretch reads RELFGCPSQA…LKYLTAQRNI (343 aa). The Mn(2+) site is built by D557 and D559.

In the C-terminal section; belongs to the glycosyltransferase 49 family. It in the N-terminal section; belongs to the glycosyltransferase 8 family. The cofactor is Mn(2+).

The protein localises to the golgi apparatus membrane. The catalysed reaction is 3-O-[beta-D-GlcA-(1-&gt;3)-beta-D-Xyl-(1-&gt;4)-Rib-ol-P-Rib-ol-P-3-beta-D-GalNAc-(1-&gt;3)-beta-D-GlcNAc-(1-&gt;4)-(O-6-P-alpha-D-Man)]-Thr-[protein] + UDP-alpha-D-xylose = 3-O-[alpha-D-Xyl-(1-&gt;3)-beta-D-GlcA-(1-&gt;4)-beta-D-Xyl-(1-&gt;4)-Rib-ol-P-Rib-ol-P-3-beta-D-GalNAc-(1-&gt;3)-beta-D-GlcNAc-(1-&gt;4)-(O-6-P-alpha-D-Man)]-Thr-[protein] + UDP + H(+). It carries out the reaction 3-O-{(1-&gt;[3)-alpha-D-Xyl-(1-&gt;3)-beta-D-GlcA-(1-&gt;](n)-4)-beta-D-Xyl-(1-&gt;4)-Rib-ol-P-Rib-ol-P-3-beta-D-GalNAc-(1-&gt;3)-beta-D-GlcNAc-(1-&gt;4)-O-6-P-alpha-D-Man}-L-Thr-[protein] + UDP-alpha-D-glucuronate = 3-O-{beta-D-GlcA-(1-&gt;[3)-alpha-D-Xyl-(1-&gt;3)-beta-D-GlcA-(1-&gt;](n)-4)-beta-D-Xyl-(1-&gt;4)-Rib-ol-P-Rib-ol-P-3-beta-D-GalNAc-(1-&gt;3)-beta-D-GlcNAc-(1-&gt;4)-O-6-P-alpha-D-Man}-L-Thr-[protein] + UDP + H(+). The enzyme catalyses 3-O-{beta-D-GlcA-(1-&gt;[3)-alpha-D-Xyl-(1-&gt;3)-beta-D-GlcA-(1-&gt;](n)-4)-beta-D-Xyl-(1-&gt;4)-Rib-ol-P-Rib-ol-P-3-beta-D-GalNAc-(1-&gt;3)-beta-D-GlcNAc-(1-&gt;4)-O-6-P-alpha-D-Man}-L-Thr-[protein] + UDP-alpha-D-xylose = 3-O-{(1-&gt;[3)-alpha-D-Xyl-(1-&gt;3)-beta-D-GlcA-(1-&gt;](n+1)-4)-beta-D-Xyl-(1-&gt;4)-Rib-ol-P-Rib-ol-P-3-beta-D-GalNAc-(1-&gt;3)-beta-D-GlcNAc-(1-&gt;4)-O-6-P-alpha-D-Man}-L-Thr-[protein] + UDP + H(+). The protein operates within protein modification; protein glycosylation. In terms of biological role, bifunctional glycosyltransferase with both alpha-1,3-xylosyltransferase and beta-1,3-glucuronyltransferase activities involved in the maturation of alpha-dystroglycan (DAG1) by glycosylation leading to DAG1 binding to laminin G-like domain-containing extracellular proteins with high affinity and in a phosphorylated-O-mannosyl trisaccharide dependent manner. Elongates the glucuronyl-beta-1,4-xylose-beta disaccharide primer structure by adding repeating units [-3-Xylose-alpha-1,3-GlcA-beta-1-] to produce a heteropolysaccharide. Supports the maturation of DAG1 more effectively than LARGE1. In addition, can modify both heparan sulfate (HS)- and chondroitin/dermatan sulfate (CS/DS)-proteoglycans (PGs), namely GPC4, with a glycosaminoglycan (GAG)-like polysaccharide composed of xylose and glucuronic acid to confer laminin binding. This is Xylosyl- and glucuronyltransferase LARGE2s from Danio rerio (Zebrafish).